A 469-amino-acid polypeptide reads, in one-letter code: Cell division protein FtsP (469 aa).

Positions 1–27 (MKLSRRQFLQRSTLAGVATVTPTSLWA) form a signal peptide, tat-type signal.

This sequence belongs to the FtsP family. Predicted to be exported by the Tat system. The position of the signal peptide cleavage has not been experimentally proven.

Its subcellular location is the periplasm. Its function is as follows. Cell division protein that is required for growth during stress conditions. May be involved in protecting or stabilizing the divisomal assembly under conditions of stress. In Glaesserella parasuis serovar 5 (strain SH0165) (Haemophilus parasuis), this protein is Cell division protein FtsP.